The primary structure comprises 291 residues: Ribosomal RNA small subunit methyltransferase A (291 aa).

Residues asparagine 27, leucine 29, glycine 54, glutamate 75, aspartate 100, and asparagine 125 each contribute to the S-adenosyl-L-methionine site.

Belongs to the class I-like SAM-binding methyltransferase superfamily. rRNA adenine N(6)-methyltransferase family. RsmA subfamily.

The protein localises to the cytoplasm. It catalyses the reaction adenosine(1518)/adenosine(1519) in 16S rRNA + 4 S-adenosyl-L-methionine = N(6)-dimethyladenosine(1518)/N(6)-dimethyladenosine(1519) in 16S rRNA + 4 S-adenosyl-L-homocysteine + 4 H(+). In terms of biological role, specifically dimethylates two adjacent adenosines (A1518 and A1519) in the loop of a conserved hairpin near the 3'-end of 16S rRNA in the 30S particle. May play a critical role in biogenesis of 30S subunits. This Streptococcus mutans serotype c (strain ATCC 700610 / UA159) protein is Ribosomal RNA small subunit methyltransferase A.